A 256-amino-acid chain; its full sequence is Protein FixA (256 aa).

This sequence belongs to the ETF beta-subunit/FixA family. Heterodimer of FixA and FixB.

It participates in amine and polyamine metabolism; carnitine metabolism. Functionally, required for anaerobic carnitine reduction. May bring reductant to CaiA. The sequence is that of Protein FixA from Escherichia fergusonii (strain ATCC 35469 / DSM 13698 / CCUG 18766 / IAM 14443 / JCM 21226 / LMG 7866 / NBRC 102419 / NCTC 12128 / CDC 0568-73).